Reading from the N-terminus, the 5541-residue chain is Malpibaldin synthetase (5541 aa).

Positions 1–13 (MGDKRPDGIKSAE) are enriched in basic and acidic residues. Residues 1 to 26 (MGDKRPDGIKSAESHGQPSAPFGAEN) form a disordered region. The condensation 1 stretch occupies residues 137-378 (KEDDIARDES…IDIISPAEKT (242 aa)). Residues 401–799 (FEEQVDKSPD…GRNDDQVKIR (399 aa)) are adenylation 1. In terms of domain architecture, Carrier 1 spans 901 to 975 (VPCGETEDAI…VLAQDLSKHQ (75 aa)). Serine 936 is subject to O-(pantetheine 4'-phosphoryl)serine. The dual epimerase/condensation (E/C) domain 1 stretch occupies residues 1021 to 1469 (QDVYSLAPLQ…LPLDERTKLL (449 aa)). The adenylation 2 stretch occupies residues 1489–1899 (FEQQVKQSPI…GRNDDQIKIR (411 aa)). In terms of domain architecture, Carrier 2 spans 2001 to 2075 (SPQGRIECAL…SFAQAFKGQL (75 aa)). An O-(pantetheine 4'-phosphoryl)serine modification is found at serine 2036. The interval 2095–2537 (ELSFSQQRLW…LGSTEEELLL (443 aa)) is condensation 2. The interval 2557–2956 (FEDQVERSPD…GRNDDQVKIR (400 aa)) is adenylation 3. The 75-residue stretch at 3058 to 3132 (EPQGEVEMKL…VLAASITRGC (75 aa)) folds into the Carrier 3 domain. Serine 3093 carries the O-(pantetheine 4'-phosphoryl)serine modification. Residues 3182 to 3616 (QDIYSLSPLQ…VIPAEEHDLL (435 aa)) form a dual epimerase/condensation (E/C) domain 2 region. Positions 3637–4038 (FENQVRERPE…GRNDEQVKIR (402 aa)) are adenylation 4. The 75-residue stretch at 4140–4214 (APRGDIEISL…VLAASLNTHQ (75 aa)) folds into the Carrier 4 domain. Serine 4175 carries the O-(pantetheine 4'-phosphoryl)serine modification. The segment at 4260 to 4695 (VQDVYSLSPL…VIPAEEHDLL (436 aa)) is dual epimerase/condensation (E/C) domain 3. The adenylation 5 stretch occupies residues 4716 to 5117 (FENQVRERPE…GRNDEQVKIR (402 aa)). The region spanning 5219-5294 (LPSGDVEIGL…ELAQKLVQGG (76 aa)) is the Carrier 5 domain. An O-(pantetheine 4'-phosphoryl)serine modification is found at serine 5254. Positions 5315–5523 (PLFCIHSGLG…VECTHIEMDK (209 aa)) are thioesterase (TE) domain.

This sequence belongs to the NRP synthetase family.

Nonribosomal peptide synthetase that catalyzes the biosynthesis of the hydrophobic cyclopentapeptides malpibaldins, natural products that show biosurfactant activities. Module 3 shows promiscuous adenylation (accepting either Trp, Phe or Tyr) leading to the parallel production of multiple products from one NRPS assembly line, including malpibaldin A corresponding to cyclo(-L-Leu-D-Leu-D-Phe-L-Leu-D-Val-), malpibaldin B corresponding to cyclo(-L-Leu-D-Leu-D-Tyr-L-Leu-D-Val-) and malpibaldin C corresponding to cyclo(-Leu-Leu-Trp-Leu-Val-). The protein is Malpibaldin synthetase of Mortierella alpina (Oleaginous fungus).